The primary structure comprises 77 residues: Bradykinin-potentiating peptide (77 aa).

A signal peptide spans 1-22 (MNKKTLLVIFIVTLLIADEVNS). The propeptide occupies 74 to 77 (RRRR).

Belongs to the non-disulfide-bridged peptide (NDBP) superfamily. Long chain multifunctional peptide (group 2) family. As to expression, expressed by the venom gland.

The protein localises to the secreted. Antimicrobial peptide. May also inhibit angiotensin-converting enzyme (ACE) and potentiate bradykinin (BK). The chain is Bradykinin-potentiating peptide from Tityus discrepans (Venezuelan scorpion).